The sequence spans 157 residues: 2-C-methyl-D-erythritol 2,4-cyclodiphosphate synthase (157 aa).

Positions 8 and 10 each coordinate a divalent metal cation. 4-CDP-2-C-methyl-D-erythritol 2-phosphate-binding positions include 8-10 (DVH) and 34-35 (HS). Residue histidine 42 coordinates a divalent metal cation. 4-CDP-2-C-methyl-D-erythritol 2-phosphate contacts are provided by residues 56–58 (DIG), 61–65 (FPDTD), 100–106 (AQAPKMA), 132–135 (TTTE), phenylalanine 139, and arginine 142.

The protein belongs to the IspF family. Homotrimer. The cofactor is a divalent metal cation.

It carries out the reaction 4-CDP-2-C-methyl-D-erythritol 2-phosphate = 2-C-methyl-D-erythritol 2,4-cyclic diphosphate + CMP. Its pathway is isoprenoid biosynthesis; isopentenyl diphosphate biosynthesis via DXP pathway; isopentenyl diphosphate from 1-deoxy-D-xylulose 5-phosphate: step 4/6. Its function is as follows. Involved in the biosynthesis of isopentenyl diphosphate (IPP) and dimethylallyl diphosphate (DMAPP), two major building blocks of isoprenoid compounds. Catalyzes the conversion of 4-diphosphocytidyl-2-C-methyl-D-erythritol 2-phosphate (CDP-ME2P) to 2-C-methyl-D-erythritol 2,4-cyclodiphosphate (ME-CPP) with a corresponding release of cytidine 5-monophosphate (CMP). This is 2-C-methyl-D-erythritol 2,4-cyclodiphosphate synthase from Serratia proteamaculans (strain 568).